The chain runs to 509 residues: Nucleolar protein 12 (509 aa).

The tract at residues 1–152 (MTTTKDNSGL…EPELDVDEET (152 aa)) is disordered. A compositionally biased stretch (basic and acidic residues) spans 28 to 40 (GKVDPVRDQQEDK). Positions 33–114 (VRDQQEDKME…EDQYMAKLAE (82 aa)) form a coiled coil. The segment covering 41 to 85 (MEVEDEEEDEEEDEEDEEEDEEDEEDEEEKEEDDDDDDDEEEIEE) has biased composition (acidic residues). Positions 112-122 (LAEEVAEEKPM) are enriched in basic and acidic residues. A compositionally biased stretch (acidic residues) spans 136-150 (PESDSEDEPELDVDE). 2 RRM domains span residues 168–266 (YTIF…SVAH) and 274–359 (RCVF…RAKS). 2 disordered regions span residues 345–403 (STTN…AGKA) and 419–509 (DGKV…SKKN). Basic residues predominate over residues 347–359 (TNKRKLRVSRAKS). The span at 361-389 (HSQERAKQADMKNIRNAKTEGLSRDEKSH) shows a compositional bias: basic and acidic residues. The segment covering 426 to 436 (RSKRRGVKPNK) has biased composition (basic residues). 2 stretches are compositionally biased toward basic and acidic residues: residues 437-451 (NRVE…EKRK) and 478-503 (FKQD…DGSK).

Belongs to the RRM RBM34 family.

It localises to the nucleus. It is found in the nucleolus. Functionally, involved in pre-25S rRNA processing. This is Nucleolar protein 12 (NOP12) from Yarrowia lipolytica (strain CLIB 122 / E 150) (Yeast).